The primary structure comprises 344 residues: Phosphoribosylformylglycinamidine cyclo-ligase (344 aa).

The protein belongs to the AIR synthase family.

The protein resides in the cytoplasm. It catalyses the reaction 2-formamido-N(1)-(5-O-phospho-beta-D-ribosyl)acetamidine + ATP = 5-amino-1-(5-phospho-beta-D-ribosyl)imidazole + ADP + phosphate + H(+). Its pathway is purine metabolism; IMP biosynthesis via de novo pathway; 5-amino-1-(5-phospho-D-ribosyl)imidazole from N(2)-formyl-N(1)-(5-phospho-D-ribosyl)glycinamide: step 2/2. The chain is Phosphoribosylformylglycinamidine cyclo-ligase from Leptospira interrogans serogroup Icterohaemorrhagiae serovar Lai (strain 56601).